Reading from the N-terminus, the 608-residue chain is Albumin 2 (608 aa).

The N-terminal stretch at 1 to 14 (MQWLSVCSLLVLLS) is a signal peptide. Residues 15–18 (VLSR) constitute a propeptide that is removed on maturation. Albumin domains lie at 19-205 (SQAQ…TFQH), 206-398 (AIAK…AGSD), and 402-600 (KITD…KLVS). 18 cysteine pairs are disulfide-bonded: Cys26/Cys72, Cys71/Cys80, Cys93/Cys108, Cys107/Cys118, Cys142/Cys187, Cys186/Cys195, Cys218/Cys264, Cys263/Cys271, Cys283/Cys299, Cys298/Cys309, Cys336/Cys381, Cys380/Cys389, Cys414/Cys460, Cys459/Cys471, Cys484/Cys500, Cys499/Cys510, Cys537/Cys582, and Cys581/Cys590. Asn501 carries N-linked (GlcNAc...) asparagine glycosylation.

Belongs to the ALB/AFP/VDB family. Plasma.

The protein localises to the secreted. Functionally, binds water, Ca(2+), Na(+), K(+), fatty acids, hormones, bilirubin and drugs. Its main function is the regulation of the colloidal osmotic pressure of blood. This Salmo salar (Atlantic salmon) protein is Albumin 2 (alb2).